Here is a 301-residue protein sequence, read N- to C-terminus: Glycine--tRNA ligase alpha subunit (301 aa).

This sequence belongs to the class-II aminoacyl-tRNA synthetase family. In terms of assembly, tetramer of two alpha and two beta subunits.

It is found in the cytoplasm. It catalyses the reaction tRNA(Gly) + glycine + ATP = glycyl-tRNA(Gly) + AMP + diphosphate. This is Glycine--tRNA ligase alpha subunit from Shewanella amazonensis (strain ATCC BAA-1098 / SB2B).